The chain runs to 361 residues: Phosphoserine aminotransferase (361 aa).

Arg-42 is an L-glutamate binding site. Pyridoxal 5'-phosphate is bound by residues 76-77, Trp-102, Thr-152, Asp-172, and Gln-195; that span reads AT. Lys-196 is subject to N6-(pyridoxal phosphate)lysine. 237–238 serves as a coordination point for pyridoxal 5'-phosphate; the sequence is NT.

The protein belongs to the class-V pyridoxal-phosphate-dependent aminotransferase family. SerC subfamily. As to quaternary structure, homodimer. Pyridoxal 5'-phosphate serves as cofactor.

The protein localises to the cytoplasm. It carries out the reaction O-phospho-L-serine + 2-oxoglutarate = 3-phosphooxypyruvate + L-glutamate. The enzyme catalyses 4-(phosphooxy)-L-threonine + 2-oxoglutarate = (R)-3-hydroxy-2-oxo-4-phosphooxybutanoate + L-glutamate. The protein operates within amino-acid biosynthesis; L-serine biosynthesis; L-serine from 3-phospho-D-glycerate: step 2/3. It functions in the pathway cofactor biosynthesis; pyridoxine 5'-phosphate biosynthesis; pyridoxine 5'-phosphate from D-erythrose 4-phosphate: step 3/5. Catalyzes the reversible conversion of 3-phosphohydroxypyruvate to phosphoserine and of 3-hydroxy-2-oxo-4-phosphonooxybutanoate to phosphohydroxythreonine. In Xanthomonas axonopodis pv. citri (strain 306), this protein is Phosphoserine aminotransferase.